Here is a 276-residue protein sequence, read N- to C-terminus: Borealin (276 aa).

Residues 111–158 (KEAKSSANSEDENMAPLKSTMKKKKASKKAPSTSKKPRTLSISKQGGT) are disordered.

This sequence belongs to the borealin family. In terms of assembly, component of the CPC complex.

Its subcellular location is the nucleus. It is found in the chromosome. It localises to the centromere. The protein localises to the cytoplasm. The protein resides in the cytoskeleton. Its subcellular location is the spindle. In terms of biological role, component of the chromosomal passenger complex (CPC), a complex that acts as a key regulator of mitosis. The CPC complex has essential functions at the centromere in ensuring correct chromosome alignment and segregation and is required for chromatin-induced microtubule stabilization and spindle assembly. The polypeptide is Borealin (cdca8) (Danio rerio (Zebrafish)).